The sequence spans 610 residues: V-type proton ATPase catalytic subunit A (610 aa).

245 to 252 lines the ATP pocket; it reads GAFGCGKT.

It belongs to the ATPase alpha/beta chains family. In terms of assembly, V-ATPase is a heteromultimeric enzyme composed of a peripheral catalytic V1 complex (main components: subunits A, B, C, D, E, and F) attached to an integral membrane V0 proton pore complex (main component: the proteolipid protein).

The catalysed reaction is ATP + H2O + 4 H(+)(in) = ADP + phosphate + 5 H(+)(out). Its function is as follows. Catalytic subunit of the peripheral V1 complex of vacuolar ATPase. V-ATPase vacuolar ATPase is responsible for acidifying a variety of intracellular compartments in eukaryotic cells. The chain is V-type proton ATPase catalytic subunit A from Trypanosoma congolense.